A 117-amino-acid chain; its full sequence is Large ribosomal subunit protein bL20 (117 aa).

The protein belongs to the bacterial ribosomal protein bL20 family.

Functionally, binds directly to 23S ribosomal RNA and is necessary for the in vitro assembly process of the 50S ribosomal subunit. It is not involved in the protein synthesizing functions of that subunit. The polypeptide is Large ribosomal subunit protein bL20 (Geotalea uraniireducens (strain Rf4) (Geobacter uraniireducens)).